A 312-amino-acid polypeptide reads, in one-letter code: Glycerol-3-phosphate dehydrogenase [NAD(P)+] (312 aa).

Positions 11, 30, 31, and 95 each coordinate NADPH. Sn-glycerol 3-phosphate contacts are provided by Lys95, Gly123, and Ser125. An NADPH-binding site is contributed by Ala127. Lys177, Asp230, Ser240, Arg241, and Asn242 together coordinate sn-glycerol 3-phosphate. Lys177 (proton acceptor) is an active-site residue. NADPH is bound at residue Arg241. Residues Val265 and Glu267 each contribute to the NADPH site.

Belongs to the NAD-dependent glycerol-3-phosphate dehydrogenase family.

The protein resides in the cytoplasm. It carries out the reaction sn-glycerol 3-phosphate + NAD(+) = dihydroxyacetone phosphate + NADH + H(+). It catalyses the reaction sn-glycerol 3-phosphate + NADP(+) = dihydroxyacetone phosphate + NADPH + H(+). Its pathway is membrane lipid metabolism; glycerophospholipid metabolism. Catalyzes the reduction of the glycolytic intermediate dihydroxyacetone phosphate (DHAP) to sn-glycerol 3-phosphate (G3P), the key precursor for phospholipid synthesis. The polypeptide is Glycerol-3-phosphate dehydrogenase [NAD(P)+] (Helicobacter acinonychis (strain Sheeba)).